Here is a 93-residue protein sequence, read N- to C-terminus: Protein S100-A5 (93 aa).

EF-hand domains lie at 12–47 (MVTT…LAEK) and 48–83 (MKES…LCMA). Positions 28, 33, 61, 63, 65, 67, and 72 each coordinate Ca(2+).

It belongs to the S-100 family. In terms of assembly, homodimer.

Its function is as follows. Binds calcium, zinc and copper. One subunit can simultaneously bind 2 calcium ions or 2 copper ions plus 1 zinc ion. Calcium and copper ions compete for the same binding sites. The protein is Protein S100-A5 (S100a5) of Mus musculus (Mouse).